The sequence spans 410 residues: LIMR family protein SELMODRAFT_432208 (410 aa).

5 consecutive transmembrane segments (helical) span residues 30-50 (LWWA…IFFY), 67-87 (LWVV…YAVI), 129-149 (VTLM…LTTL), 156-176 (ICLD…NTII), and 179-199 (ILFM…LIFA). Positions 245-274 (RMFRKNVKKVQQELVFLEDDVEALNEAFPQ) form a coiled coil. The next 2 membrane-spanning stretches (helical) occupy residues 288–308 (LVFG…IIVF) and 330–350 (GGLL…MSVI). Residues 389 to 400 (PSSAMDSSSWSA) are compositionally biased toward low complexity. A disordered region spans residues 389-410 (PSSAMDSSSWSADRPCRPWPWP).

It belongs to the LIMR family.

It localises to the membrane. In Selaginella moellendorffii (Spikemoss), this protein is LIMR family protein SELMODRAFT_432208.